We begin with the raw amino-acid sequence, 480 residues long: Ribulose bisphosphate carboxylase large chain (480 aa).

Positions 1 to 2 (MS) are excised as a propeptide. Pro-3 carries the N-acetylproline modification. Lys-14 carries the N6,N6,N6-trimethyllysine modification. Substrate is bound by residues Asn-123 and Thr-173. Lys-175 acts as the Proton acceptor in catalysis. Lys-177 serves as a coordination point for substrate. Mg(2+) is bound by residues Lys-201, Asp-203, and Glu-204. Position 201 is an N6-carboxylysine (Lys-201). The active-site Proton acceptor is His-294. Residues Arg-295, His-327, and Ser-379 each coordinate substrate.

This sequence belongs to the RuBisCO large chain family. Type I subfamily. In terms of assembly, heterohexadecamer of 8 large chains and 8 small chains; disulfide-linked. The disulfide link is formed within the large subunit homodimers. Mg(2+) is required as a cofactor. The disulfide bond which can form in the large chain dimeric partners within the hexadecamer appears to be associated with oxidative stress and protein turnover.

The protein localises to the plastid. It is found in the chloroplast. It carries out the reaction 2 (2R)-3-phosphoglycerate + 2 H(+) = D-ribulose 1,5-bisphosphate + CO2 + H2O. It catalyses the reaction D-ribulose 1,5-bisphosphate + O2 = 2-phosphoglycolate + (2R)-3-phosphoglycerate + 2 H(+). RuBisCO catalyzes two reactions: the carboxylation of D-ribulose 1,5-bisphosphate, the primary event in carbon dioxide fixation, as well as the oxidative fragmentation of the pentose substrate in the photorespiration process. Both reactions occur simultaneously and in competition at the same active site. In Rivina humilis (Rougeplant), this protein is Ribulose bisphosphate carboxylase large chain.